A 559-amino-acid polypeptide reads, in one-letter code: uncharacterized protein (559 aa).

The span at 1 to 10 (MSGRRGDHPG) shows a compositional bias: basic and acidic residues. The segment at 1–76 (MSGRRGDHPG…ERSRVPPRTT (76 aa)) is disordered. 11 consecutive transmembrane segments (helical) span residues 128–148 (FAVD…AAAS), 155–175 (VALY…LIGP), 186–206 (VALA…IMNY), 208–228 (GATG…MMVF), 259–279 (VFGL…VEFV), 283–303 (LFQL…GASL), 358–378 (LWGN…PAFV), 387–407 (WVQL…NFAG), 428–448 (VLVT…ATAI), 490–510 (LAWV…WVGF), and 515–535 (ALLI…SLIP).

To M.leprae ML2143.

It is found in the cell membrane. This is an uncharacterized protein from Mycobacterium tuberculosis (strain CDC 1551 / Oshkosh).